The primary structure comprises 84 residues: Small ribosomal subunit protein uS17 (84 aa).

It belongs to the universal ribosomal protein uS17 family. Part of the 30S ribosomal subunit.

One of the primary rRNA binding proteins, it binds specifically to the 5'-end of 16S ribosomal RNA. The chain is Small ribosomal subunit protein uS17 from Pectobacterium atrosepticum (strain SCRI 1043 / ATCC BAA-672) (Erwinia carotovora subsp. atroseptica).